Reading from the N-terminus, the 149-residue chain is Calmodulin-like protein 3 (149 aa).

EF-hand domains lie at 8–43, 44–79, 81–116, and 117–149; these read EQIA…LGQN, PTEA…KMKD, DSEE…LGEK, and LSDE…LVSK. Ca(2+)-binding residues include Asp21, Asp23, Asp25, Cys27, Glu32, Asp57, Asp59, Asn61, Thr63, Glu68, Asp94, Asp96, Asn98, Glu105, Asp130, Asp132, Asp134, Gln136, and Glu141.

This sequence belongs to the calmodulin family. As to quaternary structure, interacts with MYO10, the interaction is calcium-dependent and essential for MYO10 function in filopodial extension.

In terms of biological role, may function as a specific light chain of unconventional myosin-10 (MYO10), also enhances MYO10 translation, possibly by acting as a chaperone for the emerging MYO10 heavy chain protein. May compete with calmodulin by binding, with different affinities, to cellular substrates. The polypeptide is Calmodulin-like protein 3 (Calml3) (Rattus norvegicus (Rat)).